Consider the following 378-residue polypeptide: Chaperone protein DnaJ (378 aa).

Positions 4–68 constitute a J domain; that stretch reads DFYEILGVSR…ETRARYDRFG (65 aa). A CR-type zinc finger spans residues 136–218; sequence GGEKEIRIPH…CGGAGRKQET (83 aa). The Zn(2+) site is built by cysteine 149, cysteine 152, cysteine 166, cysteine 169, cysteine 192, cysteine 195, cysteine 206, and cysteine 209. CXXCXGXG motif repeat units follow at residues 149–156, 166–173, 192–199, and 206–213; these read CKTCSGSG, CGTCNGTG, CPTCNGEG, and CESCGGAG.

It belongs to the DnaJ family. In terms of assembly, homodimer. Requires Zn(2+) as cofactor.

Its subcellular location is the cytoplasm. Functionally, participates actively in the response to hyperosmotic and heat shock by preventing the aggregation of stress-denatured proteins and by disaggregating proteins, also in an autonomous, DnaK-independent fashion. Unfolded proteins bind initially to DnaJ; upon interaction with the DnaJ-bound protein, DnaK hydrolyzes its bound ATP, resulting in the formation of a stable complex. GrpE releases ADP from DnaK; ATP binding to DnaK triggers the release of the substrate protein, thus completing the reaction cycle. Several rounds of ATP-dependent interactions between DnaJ, DnaK and GrpE are required for fully efficient folding. Also involved, together with DnaK and GrpE, in the DNA replication of plasmids through activation of initiation proteins. This Picosynechococcus sp. (strain ATCC 27264 / PCC 7002 / PR-6) (Agmenellum quadruplicatum) protein is Chaperone protein DnaJ.